Consider the following 678-residue polypeptide: Methionine--tRNA ligase (678 aa).

The short motif at 14–24 is the 'HIGH' region element; sequence PYANGSIHLGH. Residues C145, C148, C158, and C161 each contribute to the Zn(2+) site. The short motif at 331-335 is the 'KMSKS' region element; it reads KMSKS. K334 provides a ligand contact to ATP. A tRNA-binding domain is found at 576–678; that stretch reads AFAAVDLRIA…SGAKPGQRVK (103 aa).

The protein belongs to the class-I aminoacyl-tRNA synthetase family. MetG type 1 subfamily. As to quaternary structure, homodimer. Requires Zn(2+) as cofactor.

The protein localises to the cytoplasm. It catalyses the reaction tRNA(Met) + L-methionine + ATP = L-methionyl-tRNA(Met) + AMP + diphosphate. Functionally, is required not only for elongation of protein synthesis but also for the initiation of all mRNA translation through initiator tRNA(fMet) aminoacylation. The polypeptide is Methionine--tRNA ligase (Ectopseudomonas mendocina (strain ymp) (Pseudomonas mendocina)).